We begin with the raw amino-acid sequence, 622 residues long: Galactolipid galactosyltransferase SFR2, chloroplastic (622 aa).

Topologically, residues 1–3 (MEL) are stromal. A helical; Signal-anchor membrane pass occupies residues 4–24 (FALLIKVAGLLATVTVGANVV). Over 25–622 (SYSRFRRQNL…LHPALASPFD (598 aa)) the chain is Cytoplasmic. Residues histidine 222, 266–267 (NE), tyrosine 377, glutamate 429, tryptophan 467, 474–475 (EW), and phenylalanine 483 each bind a beta-D-glucoside. Glutamate 267 (proton donor) is an active-site residue. Glutamate 429 functions as the Nucleophile in the catalytic mechanism.

The protein belongs to the glycosyl hydrolase 1 family. Expressed in hypocotyls, cotyledons, stems, leaves, pedicels, sepals, anthers and pistils. Limited expression in roots. Not detected in petals or filaments.

The protein localises to the plastid. It localises to the chloroplast. Its subcellular location is the chloroplast outer membrane. The enzyme catalyses 2 a 1,2-diacyl-3-O-(beta-D-galactosyl)-sn-glycerol = a 1,2-diacyl-3-O-[beta-D-galactosyl-(1-&gt;6)-beta-D-galactosyl]-sn-glycerol + a 1,2-diacyl-sn-glycerol. Induced by MgCl(2). Glycosyl hydrolase family protein acting primarily as a highly specific galactosyltransferase. Synthesizes digalactosyldiacylglycerol from monogalactosyldiacylglycerol in the absence of UDP-galactose in vitro. Hydrolyzes o- and p-nitrophenyl beta-D-glucoside in vitro. Plays a role in freezing tolerance. May play a role in chloroplast protection. This is Galactolipid galactosyltransferase SFR2, chloroplastic from Arabidopsis thaliana (Mouse-ear cress).